Reading from the N-terminus, the 723-residue chain is Ribosome quality control complex subunit 1 (723 aa).

The tract at residues 21–125 (SNSNANKMTS…DKGSDDDDDD (105 aa)) is disordered. The span at 27–37 (KMTSGKSTAGN) shows a compositional bias: polar residues. Basic residues predominate over residues 93 to 108 (SSRRKKNKKAKRKQKN). Residues 109 to 118 (HTAEAAKDKG) are compositionally biased toward basic and acidic residues. A Phosphoserine modification is found at serine 119. Phosphothreonine is present on threonine 158. A Phosphoserine modification is found at serine 160.

This sequence belongs to the TCF25 family. In terms of assembly, component of the ribosome quality control complex (RQC), composed of the E3 ubiquitin ligase RKR1/LTN1, RQC1 and RQC2, as well as CDC48 and its ubiquitin-binding cofactors. RQC forms a stable complex with 60S ribosomal subunits.

The protein resides in the cytoplasm. Its function is as follows. Component of the ribosome quality control complex (RQC), a ribosome-associated complex that mediates ubiquitination and extraction of incompletely synthesized nascent chains for proteasomal degradation. Within the RQC complex, RQC1 is essential for the recruitment of CDC48 to incompletely synthesized nascent polypeptides that are ubiquitinated by RKR1/LTN1. The polypeptide is Ribosome quality control complex subunit 1 (Saccharomyces cerevisiae (strain ATCC 204508 / S288c) (Baker's yeast)).